The chain runs to 103 residues: Defensin-like protein 289 (103 aa).

Residues 1 to 29 (MATLKTTIFIIFILYISCTMFVNIFRVQA) form the signal peptide. Cystine bridges form between cysteine 33–cysteine 50, cysteine 39–cysteine 55, cysteine 43–cysteine 57, cysteine 72–cysteine 92, cysteine 78–cysteine 98, and cysteine 84–cysteine 100.

This sequence belongs to the DEFL family.

It localises to the secreted. This is Defensin-like protein 289 from Arabidopsis thaliana (Mouse-ear cress).